Reading from the N-terminus, the 291-residue chain is T-cell leukemia homeobox protein 3 (291 aa).

The segment at 1–56 (MEAPASAQTPHPHEPISFGIDQILNSPDQDSAPAPRGPDGASYLGGPPGGRPGATY) is disordered. The homeobox DNA-binding region spans 166–225 (RKKPRTSFSRVQICELEKRFHRQKYLASAERAALAKSLKMTDAQVKTWFQNRRTKWRRQT).

It is found in the nucleus. The polypeptide is T-cell leukemia homeobox protein 3 (TLX3) (Homo sapiens (Human)).